We begin with the raw amino-acid sequence, 181 residues long: ATP-dependent protease subunit HslV (181 aa).

Residue threonine 7 is part of the active site. The Na(+) site is built by alanine 165, cysteine 168, and threonine 171.

This sequence belongs to the peptidase T1B family. HslV subfamily. In terms of assembly, a double ring-shaped homohexamer of HslV is capped on each side by a ring-shaped HslU homohexamer. The assembly of the HslU/HslV complex is dependent on binding of ATP.

The protein resides in the cytoplasm. It carries out the reaction ATP-dependent cleavage of peptide bonds with broad specificity.. With respect to regulation, allosterically activated by HslU binding. Functionally, protease subunit of a proteasome-like degradation complex believed to be a general protein degrading machinery. The protein is ATP-dependent protease subunit HslV of Lysinibacillus sphaericus (strain C3-41).